The sequence spans 391 residues: GTPase Obg (391 aa).

One can recognise an Obg domain in the interval 1–159; that stretch reads MKFVDEASIL…RDLLLELMLL (159 aa). The interval 127–147 is disordered; that stretch reads NTRFKSSVNRTPRQKTNGTPG. Polar residues predominate over residues 129–145; sequence RFKSSVNRTPRQKTNGT. The OBG-type G domain maps to 160 to 333; it reads ADVGMLGMPN…LCWDVMTFII (174 aa). GTP is bound by residues 166-173, 191-195, 213-216, 283-286, and 314-316; these read GMPNAGKS, FTTLV, DIPG, NKID, and SAA. Residues Ser173 and Thr193 each contribute to the Mg(2+) site.

It belongs to the TRAFAC class OBG-HflX-like GTPase superfamily. OBG GTPase family. As to quaternary structure, monomer. Mg(2+) is required as a cofactor.

It localises to the cytoplasm. Its function is as follows. An essential GTPase which binds GTP, GDP and possibly (p)ppGpp with moderate affinity, with high nucleotide exchange rates and a fairly low GTP hydrolysis rate. Plays a role in control of the cell cycle, stress response, ribosome biogenesis and in those bacteria that undergo differentiation, in morphogenesis control. The polypeptide is GTPase Obg (Salmonella arizonae (strain ATCC BAA-731 / CDC346-86 / RSK2980)).